The primary structure comprises 435 residues: C4-dicarboxylate transport protein (435 aa).

Transmembrane regions (helical) follow at residues 4–24, 44–64, 76–96, 142–162, 184–204, 222–242, 289–309, 326–346, and 352–372; these read SLFK…ILLG, LIKM…IAGM, VALL…LIIV, IGAF…LFGF, VIFG…FGAM, LIIC…GTIA, VVGL…SIYL, IFHQ…VAGV, and IVLA…LALI.

This sequence belongs to the dicarboxylate/amino acid:cation symporter (DAACS) (TC 2.A.23) family.

The protein localises to the cell inner membrane. Its function is as follows. Responsible for the transport of dicarboxylates such as succinate, fumarate, and malate from the periplasm across the membrane. This is C4-dicarboxylate transport protein from Salmonella paratyphi A (strain ATCC 9150 / SARB42).